The chain runs to 480 residues: Protein nucleotidyltransferase YdiU (480 aa).

Residues Gly-87, Gly-89, Arg-90, Lys-110, Asp-122, Gly-123, Arg-173, and Arg-180 each coordinate ATP. The active-site Proton acceptor is the Asp-249. Residues Asn-250 and Asp-259 each coordinate Mg(2+). Asp-259 contacts ATP.

It belongs to the SELO family. The cofactor is Mg(2+). Mn(2+) serves as cofactor.

The catalysed reaction is L-seryl-[protein] + ATP = 3-O-(5'-adenylyl)-L-seryl-[protein] + diphosphate. It carries out the reaction L-threonyl-[protein] + ATP = 3-O-(5'-adenylyl)-L-threonyl-[protein] + diphosphate. It catalyses the reaction L-tyrosyl-[protein] + ATP = O-(5'-adenylyl)-L-tyrosyl-[protein] + diphosphate. The enzyme catalyses L-histidyl-[protein] + UTP = N(tele)-(5'-uridylyl)-L-histidyl-[protein] + diphosphate. The catalysed reaction is L-seryl-[protein] + UTP = O-(5'-uridylyl)-L-seryl-[protein] + diphosphate. It carries out the reaction L-tyrosyl-[protein] + UTP = O-(5'-uridylyl)-L-tyrosyl-[protein] + diphosphate. Functionally, nucleotidyltransferase involved in the post-translational modification of proteins. It can catalyze the addition of adenosine monophosphate (AMP) or uridine monophosphate (UMP) to a protein, resulting in modifications known as AMPylation and UMPylation. The protein is Protein nucleotidyltransferase YdiU of Anoxybacillus flavithermus (strain DSM 21510 / WK1).